A 115-amino-acid polypeptide reads, in one-letter code: UPF0295 protein BLi00901/BL05075 (115 aa).

A run of 2 helical transmembrane segments spans residues Leu-18–Leu-38 and Val-41–Gly-61.

The protein belongs to the UPF0295 family.

Its subcellular location is the cell membrane. This is UPF0295 protein BLi00901/BL05075 from Bacillus licheniformis (strain ATCC 14580 / DSM 13 / JCM 2505 / CCUG 7422 / NBRC 12200 / NCIMB 9375 / NCTC 10341 / NRRL NRS-1264 / Gibson 46).